A 93-amino-acid polypeptide reads, in one-letter code: Alpha-defensin 2 (93 aa).

The signal sequence occupies residues 1–19 (MKPLVLLSALVLLSFQVQA). The propeptide occupies 20-58 (DPIQNTDEETKTEEQSGEEDQAVSVSFGDREGASLQEES). Residues 23-49 (QNTDEETKTEEQSGEEDQAVSVSFGDR) form a disordered region. 3 cysteine pairs are disulfide-bonded: C64-C92, C66-C81, and C71-C91.

The protein belongs to the alpha-defensin family. As to expression, paneth cells of the small bowel.

It localises to the secreted. Functionally, has broad-spectrum antimicrobial properties. Has antibacterial activity against the Gram-positive bacterium L.monocytogenes EGD and the Gram-negative bacteria E.coli ML-35p and avirulent S.typhimurium 7953, but not against the mouse-virulent S.typhimurium 14028S. Probably contributes to the antimicrobial barrier function of the small bowel mucosa. This Mus musculus (Mouse) protein is Alpha-defensin 2 (Defa2).